Reading from the N-terminus, the 382-residue chain is MSTYTRPVMLLLCGLLLLTLAIAVLNTLVPLWLAQANLPTWQVGMVSSSYFTGNLVGTLFTGYLIKRIGFNRSYYLASLIFAAGCVGLGVMVGFWSWMSWRFIAGIGCAMIWVVVESALMCSGTSHNRGRLLAAYMMVYYMGTFLGQLLVSKVSGELLHVLPWVTGMILAGILPLLFTRIVNQQTQARHSSSISAMLKLRQARLGVNGCIISGIVLGSLYGLMPLYLKHQGMANASIGFWMAVLVSAGILGQWPMGRLADKFGRLLVLRVQVFVVILGSIAMLTQAAMAPALFILGAAGFTLYPVAMAWACEKVEHHQLVAMNQALLLSYTVGSLLGPSFAAMLMQNYSDNLLFIMIASVSFIYLLMLLRNAGQTPNPVAHI.

12 consecutive transmembrane segments (helical) span residues 8–28 (VMLL…LNTL), 45–65 (MVSS…GYLI), 75–95 (YLAS…VGFW), 102–122 (FIAG…LMCS), 131–151 (LLAA…LLVS), 157–177 (LLHV…PLLF), 204–224 (LGVN…GLMP), 231–251 (GMAN…GILG), 270–290 (VQVF…AMAP), 291–311 (ALFI…AWAC), 325–345 (ALLL…AMLM), and 349–369 (SDNL…LMLL).

Belongs to the major facilitator superfamily. YcaD (TC 2.A.1.26) family.

The protein resides in the cell inner membrane. This is an uncharacterized protein from Salmonella newport (strain SL254).